We begin with the raw amino-acid sequence, 396 residues long: MTEHNVRNFNINFGPQHPAAHGVLRLVLELDGEIVERVDPHIGLLHRGTEKLIETKTYLQAVPYFDRLDYVAPMNQEHAYALAVERLLGIEIPIRGQLIRVLYSEIGRILSHLLNVTTQAMDVGALTPPLWGFEEREKLMVFYERASGSRMHAAYIRPGGVHQDLPEKLVQDIGDWCDPFLKALDDIDNLLTGNRIFKQRNVDIGVVSLEDCWAWGFSGVMVRGSGAAWDLRRAQPYECYSDLEFDIPIGKNGDNYDRYLIRMIEMRQSVRIMKQCVNRLLSDAKTGPFSSIDGKVVPPKRGEMKRSMEALIHHFKLYTEGYHVPAGEVYAAVEAPKGEFGVYLVSDGSNKPYRCKIRAPGYAHLQAMDFMCRGHQLADVAAVLGSLDIVFGEVDR.

This sequence belongs to the complex I 49 kDa subunit family. In terms of assembly, NDH-1 is composed of 14 different subunits. Subunits NuoB, C, D, E, F, and G constitute the peripheral sector of the complex.

The protein localises to the cell inner membrane. It carries out the reaction a quinone + NADH + 5 H(+)(in) = a quinol + NAD(+) + 4 H(+)(out). In terms of biological role, NDH-1 shuttles electrons from NADH, via FMN and iron-sulfur (Fe-S) centers, to quinones in the respiratory chain. The immediate electron acceptor for the enzyme in this species is believed to be ubiquinone. Couples the redox reaction to proton translocation (for every two electrons transferred, four hydrogen ions are translocated across the cytoplasmic membrane), and thus conserves the redox energy in a proton gradient. This is NADH-quinone oxidoreductase subunit D 1 from Rhizobium etli (strain CIAT 652).